The chain runs to 212 residues: Large ribosomal subunit protein uL3 (212 aa).

Positions 127-153 (FRGGPATHGQSDRHRAPGSIGSGTTPG) are disordered.

It belongs to the universal ribosomal protein uL3 family. In terms of assembly, part of the 50S ribosomal subunit. Forms a cluster with proteins L14 and L19.

One of the primary rRNA binding proteins, it binds directly near the 3'-end of the 23S rRNA, where it nucleates assembly of the 50S subunit. This chain is Large ribosomal subunit protein uL3, found in Herpetosiphon aurantiacus (strain ATCC 23779 / DSM 785 / 114-95).